Consider the following 123-residue polypeptide: UPF0342 protein LAR_1202 (123 aa).

It belongs to the UPF0342 family.

The chain is UPF0342 protein LAR_1202 from Limosilactobacillus reuteri subsp. reuteri (strain JCM 1112) (Lactobacillus reuteri).